Here is a 743-residue protein sequence, read N- to C-terminus: MKQAMTPEEIKEKKPYLDWSLTEHEYDYICDKLLKRLPNYTEIGLFSAMWSEHCSYKKSKPVLRLFPTKGKRVVQGPGEGAGVVDIDDGQAVVFKAESHNHPTTVEPYQGAATGVGGILRDVFSMGARPVAILDSLHFGELKNNPTMRYKMEETIRGVGDYGNCIGIPNLGGETTFDSCYNGNILLNAMCVGLMNIKDMEHGKAVGLGNSIMYVGAKTGRDGIHGATFASADFSKEHETQRSAVQVGDPFMEKLLMEACLELILKHRDWLVGIQDMGAAGIVSSSAEMATEGNAGMELNLDLVPQREPNMSAYEIMLSESQERMLLCVKKGHEEDVKKIFKDYNLDAVTIGRVIEGENYVLYHEGEKVCDIPVRSLTEDVLEEPSKEIKPQYIIDAEKMPAWRPSFESSGEILKRLLNQPTIANDQFITQQYDSQVRSNTIVKPGSDAGVLRIRHTKKAIAMCTDTNGRFVYLNPKIGGQRSVIESVCNIVASGAKPLAITDCLNYGDPNDPEIFWSLRESCQGIADACRIFETPVVSGNVSLYNENDGQAIYPSPMIGMVGLIKNTDYVIPMHVQEADDIVYLVGKTTADFAGSEVQKMLQGKISGLPEAPNLELIHDYLKNLHKAMTQGLVTSAHDLSEGGLAVSLAESVFDTEFGLNINLSEFDKTLLFSETPGRLIVSVKPENKSAFESLLGSAVQEIGRVTDQRKLSIKLANDELNTDVASLEKIWKESIPCLMKSKA.

His53 is an active-site residue. Residues Tyr56 and Lys95 each contribute to the ATP site. Glu97 serves as a coordination point for Mg(2+). Residues 98 to 101 and Arg120 contribute to the substrate site; that span reads SHNH. His99 serves as the catalytic Proton acceptor. Asp121 is a binding site for Mg(2+). Gln245 is a substrate binding site. Position 275 (Asp275) interacts with Mg(2+). 319–321 serves as a coordination point for substrate; sequence ESQ. ATP is bound by residues Asp502 and Gly539. Asn540 contacts Mg(2+). Ser542 contacts substrate.

It belongs to the FGAMS family. In terms of assembly, monomer. Part of the FGAM synthase complex composed of 1 PurL, 1 PurQ and 2 PurS subunits.

The protein resides in the cytoplasm. The enzyme catalyses N(2)-formyl-N(1)-(5-phospho-beta-D-ribosyl)glycinamide + L-glutamine + ATP + H2O = 2-formamido-N(1)-(5-O-phospho-beta-D-ribosyl)acetamidine + L-glutamate + ADP + phosphate + H(+). Its pathway is purine metabolism; IMP biosynthesis via de novo pathway; 5-amino-1-(5-phospho-D-ribosyl)imidazole from N(2)-formyl-N(1)-(5-phospho-D-ribosyl)glycinamide: step 1/2. Its function is as follows. Part of the phosphoribosylformylglycinamidine synthase complex involved in the purines biosynthetic pathway. Catalyzes the ATP-dependent conversion of formylglycinamide ribonucleotide (FGAR) and glutamine to yield formylglycinamidine ribonucleotide (FGAM) and glutamate. The FGAM synthase complex is composed of three subunits. PurQ produces an ammonia molecule by converting glutamine to glutamate. PurL transfers the ammonia molecule to FGAR to form FGAM in an ATP-dependent manner. PurS interacts with PurQ and PurL and is thought to assist in the transfer of the ammonia molecule from PurQ to PurL. This chain is Phosphoribosylformylglycinamidine synthase subunit PurL, found in Lactobacillus helveticus (strain DPC 4571).